A 412-amino-acid polypeptide reads, in one-letter code: Potassium channel, subfamily K, member 13 (412 aa).

The Cytoplasmic segment spans residues Met1–Arg21. Residues Phe22–Ala42 form a helical membrane-spanning segment. An intramembrane region (pore-forming) is located at residues Trp97–Met117. Residues Thr112, Ile113, and Gly114 each coordinate K(+). Positions Thr112–Met117 are selectivity filter 1. Residues Ile127–Phe147 traverse the membrane as a helical segment. Residues Leu148–Ser198 lie on the Cytoplasmic side of the membrane. Residues Val199–Ala219 traverse the membrane as a helical segment. The segment at residues Tyr229–Val249 is an intramembrane region (pore-forming). Residues Thr242, Ile243, Gly244, and Phe245 each coordinate K(+). The selectivity filter 2 stretch occupies residues Thr242 to Asp247. Residues Leu268–Ile288 form a helical membrane-spanning segment. At Lys289 to Arg412 the chain is on the cytoplasmic side. The segment covering Met374–Ser386 has biased composition (polar residues). Residues Met374–Val395 are disordered.

This sequence belongs to the two pore domain potassium channel (TC 1.A.1.8) family. Homodimer. Heterodimer. In terms of tissue distribution, brain and heart.

The protein resides in the cell membrane. It catalyses the reaction K(+)(in) = K(+)(out). Its activity is regulated as follows. The channel conductance is activated by arachidonic acid and inhibited by Ba(2+) ions, volatile anesthetics such as halothane and antiarrhythmic drug mexiletine. Insensitive to extracellular pH change. K(+) channel that conducts outward rectifying tonic currents potentiated by purinergic signals. Homo- and heterodimerizes to form functional channels with distinct regulatory and gating properties. Contributes most of K(+) currents at the plasma membrane of resting microglia. Maintains a depolarized membrane potential required for proper ramified microglia morphology and phagocytosis, selectively mediating microglial pruning of presynaptic compartments at hippocampal excitatory synapses. Upon local release of ATP caused by neuronal injury or infection, it is potentiated by purinergic signaling and contributes to ATP-triggered K(+) efflux underlying microglial NLRP3 inflammasome assembly and IL1B release. This chain is Potassium channel, subfamily K, member 13, found in Danio rerio (Zebrafish).